A 262-amino-acid chain; its full sequence is MNRIDRRFDDLKKEGKKALITFITAGDPDIDTTYDIVLALEEAGADIIELGIPYSDPLADGPTIQASSQRALAKGIKIKDIMDLVMRIREKSDIPIVYLVYYNSVFKYGIEKFLEDSKNAGVDGLIIPDLPLEERKEVLDVADKYEIYLIPLVAPTSKERIKGITENGKGFVYCVTLTGVTGAREEITTDLEEYMRLVSSYTSMPKALGFGISGPEMARKLKSLSDGIVVGSAIVERIAKGYNRCEMLKEVKEFVLSLREVL.

Residues Glu49 and Asp60 each act as proton acceptor in the active site.

It belongs to the TrpA family. Tetramer of two alpha and two beta chains.

It carries out the reaction (1S,2R)-1-C-(indol-3-yl)glycerol 3-phosphate + L-serine = D-glyceraldehyde 3-phosphate + L-tryptophan + H2O. It participates in amino-acid biosynthesis; L-tryptophan biosynthesis; L-tryptophan from chorismate: step 5/5. Functionally, the alpha subunit is responsible for the aldol cleavage of indoleglycerol phosphate to indole and glyceraldehyde 3-phosphate. The protein is Tryptophan synthase alpha chain of Caldanaerobacter subterraneus subsp. tengcongensis (strain DSM 15242 / JCM 11007 / NBRC 100824 / MB4) (Thermoanaerobacter tengcongensis).